We begin with the raw amino-acid sequence, 678 residues long: Gamma-tubulin complex component 2 (678 aa).

Triggers nucleus envelope localization stretches follow at residues 63–116 (QELI…RIFP), 118–180 (CEYY…FYCQ), 290–318 (IPGF…GHNV), 472–548 (LSIV…EVLE), and 587–622 (PDVL…SQSH).

This sequence belongs to the TUBGCP family. As to quaternary structure, part of the gamma-tubulin complex. Gamma-tubulin complex is composed of gamma-tubulin and GCP proteins (e.g. GCP2 and GCP3). Interacts directly with GCP3.

It is found in the cytoplasm. It localises to the cytoskeleton. The protein resides in the microtubule organizing center. The protein localises to the nucleus envelope. Its subcellular location is the cell cortex. Functionally, gamma-tubulin complex is necessary for microtubule nucleation at the microtubule organizing centers (MTOCs). Required for the positioning of the gamma-tubulin-containing complex on pre-existing microtubules and for the proper organization of cortical arrays. The chain is Gamma-tubulin complex component 2 (GCP2) from Arabidopsis thaliana (Mouse-ear cress).